We begin with the raw amino-acid sequence, 175 residues long: CDP-archaeol synthase (175 aa).

The next 4 membrane-spanning stretches (helical) occupy residues 41-61 (GLFSGIFCGFLAGCVEVWLSF), 82-102 (LIVVLALASGALFGDMFKSFF), 122-142 (FVVGAWVFTYLAAPEWFVSNF), and 150-170 (VIIITPLLHLTTNIIGYFIGV).

The protein belongs to the CDP-archaeol synthase family. Mg(2+) serves as cofactor.

The protein resides in the cell membrane. The catalysed reaction is 2,3-bis-O-(geranylgeranyl)-sn-glycerol 1-phosphate + CTP + H(+) = CDP-2,3-bis-O-(geranylgeranyl)-sn-glycerol + diphosphate. Its pathway is membrane lipid metabolism; glycerophospholipid metabolism. Catalyzes the formation of CDP-2,3-bis-(O-geranylgeranyl)-sn-glycerol (CDP-archaeol) from 2,3-bis-(O-geranylgeranyl)-sn-glycerol 1-phosphate (DGGGP) and CTP. This reaction is the third ether-bond-formation step in the biosynthesis of archaeal membrane lipids. This is CDP-archaeol synthase from Methanosarcina mazei (strain ATCC BAA-159 / DSM 3647 / Goe1 / Go1 / JCM 11833 / OCM 88) (Methanosarcina frisia).